Reading from the N-terminus, the 101-residue chain is Ribonuclease P protein component 1 (101 aa).

The protein belongs to the eukaryotic/archaeal RNase P protein component 1 family. Consists of a catalytic RNA component and at least 4-5 protein subunits.

The protein localises to the cytoplasm. The enzyme catalyses Endonucleolytic cleavage of RNA, removing 5'-extranucleotides from tRNA precursor.. Functionally, part of ribonuclease P, a protein complex that generates mature tRNA molecules by cleaving their 5'-ends. The chain is Ribonuclease P protein component 1 from Methanococcoides burtonii (strain DSM 6242 / NBRC 107633 / OCM 468 / ACE-M).